The primary structure comprises 469 residues: Ribulose bisphosphate carboxylase large chain (469 aa).

Residue lysine 8 is modified to N6,N6,N6-trimethyllysine. Residues asparagine 117 and threonine 167 each coordinate substrate. Lysine 169 acts as the Proton acceptor in catalysis. Substrate is bound at residue lysine 171. 3 residues coordinate Mg(2+): lysine 195, aspartate 197, and glutamate 198. An N6-carboxylysine modification is found at lysine 195. Histidine 288 (proton acceptor) is an active-site residue. Positions 289, 321, and 373 each coordinate substrate.

This sequence belongs to the RuBisCO large chain family. Type I subfamily. In terms of assembly, heterohexadecamer of 8 large chains and 8 small chains; disulfide-linked. The disulfide link is formed within the large subunit homodimers. Mg(2+) serves as cofactor. In terms of processing, the disulfide bond which can form in the large chain dimeric partners within the hexadecamer appears to be associated with oxidative stress and protein turnover.

The protein localises to the plastid. It is found in the chloroplast. It catalyses the reaction 2 (2R)-3-phosphoglycerate + 2 H(+) = D-ribulose 1,5-bisphosphate + CO2 + H2O. The catalysed reaction is D-ribulose 1,5-bisphosphate + O2 = 2-phosphoglycolate + (2R)-3-phosphoglycerate + 2 H(+). In terms of biological role, ruBisCO catalyzes two reactions: the carboxylation of D-ribulose 1,5-bisphosphate, the primary event in carbon dioxide fixation, as well as the oxidative fragmentation of the pentose substrate in the photorespiration process. Both reactions occur simultaneously and in competition at the same active site. The protein is Ribulose bisphosphate carboxylase large chain of Akania bidwillii (Turnipwood).